Consider the following 115-residue polypeptide: Nucleoid-associated protein tlr0723 (115 aa).

It belongs to the YbaB/EbfC family. In terms of assembly, homodimer.

Its subcellular location is the cytoplasm. The protein resides in the nucleoid. Functionally, binds to DNA and alters its conformation. May be involved in regulation of gene expression, nucleoid organization and DNA protection. The polypeptide is Nucleoid-associated protein tlr0723 (Thermosynechococcus vestitus (strain NIES-2133 / IAM M-273 / BP-1)).